The primary structure comprises 359 residues: MRQIMIAVAIAVAVSILLTPALIRLFTKQGFGHQIREDGPPSHHSKRGTPSMGGVAILAGIWAGYFGTHLAGLAFDGEGITASGLLVLGLATSLGGVGFLDDMIKLRRSRNLGLNKTAKTVGQITSAVLFAVLVLQFRNPAGLAPASAELSYVREIATVTLTPALFVLFCVLVVSAWSNAVNFTDGLDGLAAGCMAMVTGAYVLITFWQDHNACVTAPGLGCYNVRDPLDLALIAAATAGACIGFLWWNAAPAKIFMGDTGSLALGGIIAGLSVTSRTEILAVVLGALFVAEITSVVLQILTFRTTGRRVFRMAPFHHHFELVGWAETTVIIRFWLLTAITCGLGVALFYGEWLAAIGA.

Helical transmembrane passes span 3–23 (QIMIAVAIAVAVSILLTPALI), 55–75 (VAILAGIWAGYFGTHLAGLAF), 80–100 (ITASGLLVLGLATSLGGVGFL), 117–137 (TAKTVGQITSAVLFAVLVLQF), 156–176 (IATVTLTPALFVLFCVLVVSA), 187–207 (LDGLAAGCMAMVTGAYVLITF), 231–251 (LALIAAATAGACIGFLWWNAA), 255–275 (IFMGDTGSLALGGIIAGLSVT), 280–300 (ILAVVLGALFVAEITSVVLQI), and 334–354 (FWLLTAITCGLGVALFYGEWL).

This sequence belongs to the glycosyltransferase 4 family. MraY subfamily. The cofactor is Mg(2+).

The protein localises to the cell membrane. The enzyme catalyses UDP-N-acetyl-alpha-D-muramoyl-L-alanyl-gamma-D-glutamyl-meso-2,6-diaminopimeloyl-D-alanyl-D-alanine + di-trans,octa-cis-undecaprenyl phosphate = di-trans,octa-cis-undecaprenyl diphospho-N-acetyl-alpha-D-muramoyl-L-alanyl-D-glutamyl-meso-2,6-diaminopimeloyl-D-alanyl-D-alanine + UMP. It participates in cell wall biogenesis; peptidoglycan biosynthesis. Its function is as follows. Catalyzes the initial step of the lipid cycle reactions in the biosynthesis of the cell wall peptidoglycan: transfers peptidoglycan precursor phospho-MurNAc-pentapeptide from UDP-MurNAc-pentapeptide onto the lipid carrier undecaprenyl phosphate, yielding undecaprenyl-pyrophosphoryl-MurNAc-pentapeptide, known as lipid I. This chain is Phospho-N-acetylmuramoyl-pentapeptide-transferase, found in Mycobacterium ulcerans (strain Agy99).